The chain runs to 360 residues: Peptide chain release factor 1 (360 aa).

Glutamine 235 carries the N5-methylglutamine modification. Positions 281–307 (ERQRADSERSADRRSQVGSGDRSERIR) are enriched in basic and acidic residues. Residues 281 to 311 (ERQRADSERSADRRSQVGSGDRSERIRTYNF) form a disordered region.

This sequence belongs to the prokaryotic/mitochondrial release factor family. Post-translationally, methylated by PrmC. Methylation increases the termination efficiency of RF1.

It localises to the cytoplasm. In terms of biological role, peptide chain release factor 1 directs the termination of translation in response to the peptide chain termination codons UAG and UAA. The sequence is that of Peptide chain release factor 1 from Rhizobium meliloti (strain 1021) (Ensifer meliloti).